Here is a 92-residue protein sequence, read N- to C-terminus: Large ribosomal subunit protein eL43 (92 aa).

Residues Cys39, Cys42, Cys57, and Cys60 each coordinate Zn(2+). The segment at 39–60 (CSFCGKTKMKRRAVGIWHCGSC) adopts a C4-type zinc-finger fold.

Belongs to the eukaryotic ribosomal protein eL43 family. As to quaternary structure, component of the large ribosomal subunit.

The protein resides in the cytoplasm. Its function is as follows. Component of the large ribosomal subunit. The ribosome is a large ribonucleoprotein complex responsible for the synthesis of proteins in the cell. The sequence is that of Large ribosomal subunit protein eL43 (rpl37a) from Ictalurus punctatus (Channel catfish).